The primary structure comprises 499 residues: Probable 2-isopropylmalate synthase (499 aa).

The region spanning 5–256 (VRIFDTTLRD…ELDVRTEMLV (252 aa)) is the Pyruvate carboxyltransferase domain. Positions 14, 194, 196, and 230 each coordinate a divalent metal cation.

Belongs to the alpha-IPM synthase/homocitrate synthase family. In terms of assembly, homodimer. The cofactor is a divalent metal cation.

The enzyme catalyses 3-methyl-2-oxobutanoate + acetyl-CoA + H2O = (2S)-2-isopropylmalate + CoA + H(+). Its pathway is amino-acid biosynthesis; L-leucine biosynthesis; L-leucine from 3-methyl-2-oxobutanoate: step 1/4. Its function is as follows. Catalyzes the condensation of the acetyl group of acetyl-CoA with 3-methyl-2-oxobutanoate (2-oxoisovalerate) to form 3-carboxy-3-hydroxy-4-methylpentanoate (2-isopropylmalate). The chain is Probable 2-isopropylmalate synthase (leuA) from Methanopyrus kandleri (strain AV19 / DSM 6324 / JCM 9639 / NBRC 100938).